The following is a 128-amino-acid chain: Cyclic ether formation enzyme gkaZ (128 aa).

The signal sequence occupies residues 1–36 (MTTARALSDGLAYLLACFNAFCIQAHLTSRFSPAFS). The next 2 membrane-spanning stretches (helical) occupy residues 61 to 81 (LRYM…LPGW) and 107 to 127 (WLLH…AIYV).

This sequence belongs to the cyclic ether formation enzyme xenC family.

Its subcellular location is the membrane. It functions in the pathway mycotoxin biosynthesis. Functionally, cyclic ether formation enzyme; part of the gene cluster that mediates the biosynthesis of GKK1032, fungal natural products containing a macrocyclic para-cyclophane connected to a decahydrofluorene ring system that show potent antitumor activities. Within the pathway, gkaZ functions synergistically with gkaB and gkaX to form the cyclophane. The pathway begins with the PKS-NRPS gkaA which, with the help of the trans-enoyl reductase gkaC, synthesizes the polyketide-tyrosyl acyl thioester product which can be reductively off-loaded by the terminal reductase (R) domain in gkaA. The alpha/beta hydrolase gkaG is then required to catalyze the subsequent Knoevenagel condensation that affords the 3-pyrrolin-2-one ring, whereas the three proteins gkaB, gkaX and gkaZ then function synergistically to form the cyclophane. The chain is Cyclic ether formation enzyme gkaZ from Penicillium citrinum.